A 103-amino-acid polypeptide reads, in one-letter code: Urease subunit beta (103 aa).

Belongs to the urease beta subunit family. As to quaternary structure, heterotrimer of UreA (gamma), UreB (beta) and UreC (alpha) subunits. Three heterotrimers associate to form the active enzyme.

The protein resides in the cytoplasm. It catalyses the reaction urea + 2 H2O + H(+) = hydrogencarbonate + 2 NH4(+). It participates in nitrogen metabolism; urea degradation; CO(2) and NH(3) from urea (urease route): step 1/1. In Blochmanniella floridana, this protein is Urease subunit beta.